Here is a 262-residue protein sequence, read N- to C-terminus: ATP synthase subunit a (262 aa).

6 consecutive transmembrane segments (helical) span residues 32-52 (IAFT…AVFV), 98-118 (LFMF…VLGI), 127-147 (FTIT…VGFW), 153-173 (FFSL…IFPI), 189-209 (LFVA…FVID), and 219-239 (LLVG…EILV).

The protein belongs to the ATPase A chain family. F-type ATPases have 2 components, CF(1) - the catalytic core - and CF(0) - the membrane proton channel. CF(1) has five subunits: alpha(3), beta(3), gamma(1), delta(1), epsilon(1). CF(0) has four main subunits: a, b, b' and c.

The protein resides in the cell inner membrane. Key component of the proton channel; it plays a direct role in the translocation of protons across the membrane. This is ATP synthase subunit a from Erythrobacter litoralis (strain HTCC2594).